A 391-amino-acid chain; its full sequence is Elongation factor Tu 1 (391 aa).

One can recognise a tr-type G domain in the interval 10–201; it reads KPHVNIGTIG…EVDNYIPTPE (192 aa). Residues 19 to 26 are G1; it reads GHVDHGKT. 19–26 lines the GTP pocket; that stretch reads GHVDHGKT. Thr26 serves as a coordination point for Mg(2+). Residues 55–59 are G2; it reads GITIS. The G3 stretch occupies residues 76-79; it reads DCPG. GTP contacts are provided by residues 76 to 80 and 131 to 134; these read DCPGH and NKVD. The tract at residues 131–134 is G4; the sequence is NKVD. A G5 region spans residues 169–171; sequence SAL.

Belongs to the TRAFAC class translation factor GTPase superfamily. Classic translation factor GTPase family. EF-Tu/EF-1A subfamily. As to quaternary structure, monomer.

The protein localises to the cytoplasm. It catalyses the reaction GTP + H2O = GDP + phosphate + H(+). GTP hydrolase that promotes the GTP-dependent binding of aminoacyl-tRNA to the A-site of ribosomes during protein biosynthesis. The chain is Elongation factor Tu 1 from Bartonella quintana (strain Toulouse) (Rochalimaea quintana).